The following is an 857-amino-acid chain: Bifunctional levopimaradiene synthase, chloroplastic (857 aa).

The N-terminal 33 residues, 1 to 33 (MALPSSSLSSQIHTGATTQCIPHFHGSLNAGTS), are a transit peptide targeting the chloroplast. K257 lines the substrate pocket. Residues D390 and D392 each coordinate Mg(2+). The DXDD motif signature appears at 390-393 (DIDD). Substrate is bound at residue K477. D609, D613, N753, T757, and E761 together coordinate Mg(2+). The DDXXD motif signature appears at 609–613 (DDLYD).

This sequence belongs to the terpene synthase family. Tpsd subfamily. Mg(2+) serves as cofactor.

Its subcellular location is the plastid. It localises to the chloroplast. The enzyme catalyses (2E,6E,10E)-geranylgeranyl diphosphate = (+)-copalyl diphosphate. It catalyses the reaction (+)-copalyl diphosphate = abieta-7,13-diene + diphosphate. It carries out the reaction (+)-copalyl diphosphate = abieta-8(14),12-diene + diphosphate. The catalysed reaction is (+)-copalyl diphosphate = neoabietadiene + diphosphate. It participates in terpene metabolism; oleoresin biosynthesis. Functionally, involved in defensive oleoresin formation in conifers in response to insect attack or other injury. Involved in diterpene (C20) olefins biosynthesis. Bifunctional enzyme that catalyzes two sequential cyclizations of geranylgeranyl diphosphate (GGPP) to levopimaradiene. Levopimaradiene is the major products of the enzyme with abietadiene and neoabietadiene. No activity with farnesyl diphosphate (FPP) as substrate. The polypeptide is Bifunctional levopimaradiene synthase, chloroplastic (Pinus banksiana (Jack pine)).